The following is a 564-amino-acid chain: Phosphomethylpyrimidine synthase (564 aa).

Residues asparagine 203, methionine 232, tyrosine 261, histidine 297, 317–319, 358–361, and glutamate 397 contribute to the substrate site; these read SRG and DGLR. A Zn(2+)-binding site is contributed by histidine 401. Tyrosine 424 contacts substrate. Histidine 465 serves as a coordination point for Zn(2+). Residues cysteine 541, cysteine 544, and cysteine 549 each coordinate [4Fe-4S] cluster.

The protein belongs to the ThiC family. It depends on [4Fe-4S] cluster as a cofactor.

The catalysed reaction is 5-amino-1-(5-phospho-beta-D-ribosyl)imidazole + S-adenosyl-L-methionine = 4-amino-2-methyl-5-(phosphooxymethyl)pyrimidine + CO + 5'-deoxyadenosine + formate + L-methionine + 3 H(+). Its pathway is cofactor biosynthesis; thiamine diphosphate biosynthesis. Catalyzes the synthesis of the hydroxymethylpyrimidine phosphate (HMP-P) moiety of thiamine from aminoimidazole ribotide (AIR) in a radical S-adenosyl-L-methionine (SAM)-dependent reaction. In Bacteroides fragilis (strain ATCC 25285 / DSM 2151 / CCUG 4856 / JCM 11019 / LMG 10263 / NCTC 9343 / Onslow / VPI 2553 / EN-2), this protein is Phosphomethylpyrimidine synthase.